Reading from the N-terminus, the 143-residue chain is UPF0201 protein Msed_1787 (143 aa).

The protein belongs to the UPF0201 family.

The chain is UPF0201 protein Msed_1787 from Metallosphaera sedula (strain ATCC 51363 / DSM 5348 / JCM 9185 / NBRC 15509 / TH2).